The sequence spans 548 residues: MQRSIAMTAKRFLHRNLLENGKPRTASSPSFSHCSSCRCWVRASSSVSGGDLRERLSKTRLRDIKLNDAIDLFSDMVKSRPFPSIVDFNRLLSAIVKLKKYDVVISLGKKMEVLGIRNDLYTFNIVINCFCCCFQVSLALSILGKMLKLGYEPDRVTIGSLVNGFCRRNRVSDAVSLVDKMVEIGYKPDIVAYNAIIDSLCKTKRVNDAFDFFKEIERKGIRPNVVTYTALVNGLCNSSRWSDAARLLSDMIKKKITPNVITYSALLDAFVKNGKVLEAKELFEEMVRMSIDPDIVTYSSLINGLCLHDRIDEANQMFDLMVSKGCLADVVSYNTLINGFCKAKRVEDGMKLFREMSQRGLVSNTVTYNTLIQGFFQAGDVDKAQEFFSQMDFFGISPDIWTYNILLGGLCDNGELEKALVIFEDMQKREMDLDIVTYTTVIRGMCKTGKVEEAWSLFCSLSLKGLKPDIVTYTTMMSGLCTKGLLHEVEALYTKMKQEGLMKNDCTLSDGDITLSAELIKKMLSCGYAPSLLKDIKSGVCKKALSLL.

The N-terminal 43 residues, 1–43, are a transit peptide targeting the mitochondrion; sequence MQRSIAMTAKRFLHRNLLENGKPRTASSPSFSHCSSCRCWVRA. PPR repeat units follow at residues 84–118, 119–153, 154–188, 189–223, 224–258, 259–293, 294–328, 329–363, 364–398, 399–433, 434–468, and 469–503; these read SIVDFNRLLSAIVKLKKYDVVISLGKKMEVLGIRN, DLYTFNIVINCFCCCFQVSLALSILGKMLKLGYEP, DRVTIGSLVNGFCRRNRVSDAVSLVDKMVEIGYKP, DIVAYNAIIDSLCKTKRVNDAFDFFKEIERKGIRP, NVVTYTALVNGLCNSSRWSDAARLLSDMIKKKITP, NVITYSALLDAFVKNGKVLEAKELFEEMVRMSIDP, DIVTYSSLINGLCLHDRIDEANQMFDLMVSKGCLA, DVVSYNTLINGFCKAKRVEDGMKLFREMSQRGLVS, NTVTYNTLIQGFFQAGDVDKAQEFFSQMDFFGISP, DIWTYNILLGGLCDNGELEKALVIFEDMQKREMDL, DIVTYTTVIRGMCKTGKVEEAWSLFCSLSLKGLKP, and DIVTYTTMMSGLCTKGLLHEVEALYTKMKQEGLMK.

This sequence belongs to the PPR family. P subfamily.

The protein localises to the mitochondrion. This Arabidopsis thaliana (Mouse-ear cress) protein is Pentatricopeptide repeat-containing protein At1g62680, mitochondrial.